The chain runs to 335 residues: Anthranilate phosphoribosyltransferase 2 (335 aa).

5-phospho-alpha-D-ribose 1-diphosphate contacts are provided by residues Gly-70, 73 to 74 (GD), Thr-78, 80 to 83 (NIST), 98 to 106 (KHGNRSASS), and Ser-110. Gly-70 contributes to the anthranilate binding site. Mg(2+) is bound at residue Ser-82. Position 101 (Asn-101) interacts with anthranilate. Residue Arg-156 coordinates anthranilate. Mg(2+) is bound by residues Asp-215 and Glu-216.

This sequence belongs to the anthranilate phosphoribosyltransferase family. In terms of assembly, homodimer. Mg(2+) is required as a cofactor.

It catalyses the reaction N-(5-phospho-beta-D-ribosyl)anthranilate + diphosphate = 5-phospho-alpha-D-ribose 1-diphosphate + anthranilate. It participates in amino-acid biosynthesis; L-tryptophan biosynthesis; L-tryptophan from chorismate: step 2/5. Functionally, catalyzes the transfer of the phosphoribosyl group of 5-phosphorylribose-1-pyrophosphate (PRPP) to anthranilate to yield N-(5'-phosphoribosyl)-anthranilate (PRA). This is Anthranilate phosphoribosyltransferase 2 from Streptomyces coelicolor (strain ATCC BAA-471 / A3(2) / M145).